The primary structure comprises 105 residues: Malonate decarboxylase acyl carrier protein (105 aa).

Residue S28 is modified to O-(phosphoribosyl dephospho-coenzyme A)serine.

This sequence belongs to the MdcC family. In terms of processing, covalently binds the prosthetic group of malonate decarboxylase.

The protein localises to the cytoplasm. Subunit of malonate decarboxylase, it is an acyl carrier protein to which acetyl and malonyl thioester residues are bound via a 2'-(5''-phosphoribosyl)-3'-dephospho-CoA prosthetic group and turn over during the catalytic mechanism. The sequence is that of Malonate decarboxylase acyl carrier protein from Xanthomonas campestris pv. campestris (strain 8004).